The chain runs to 160 residues: Small ribosomal subunit protein uS9 (160 aa).

It belongs to the universal ribosomal protein uS9 family.

This Rhodopseudomonas palustris (strain ATCC BAA-98 / CGA009) protein is Small ribosomal subunit protein uS9.